Reading from the N-terminus, the 338-residue chain is MTTLRLLISDSYDPWFNLAVEEYIFRQMPATQRVLFLWRNADTVVIGRAQNPWKECNTRRMEEDNVRLARRSSGGGAVFHDLGNTCFTFMAGKPEYDKTISTHIVLAALNSLGVMADASGRNDLVVKTPDGDRKVSGSAYRETKDRGFHHGTLLLNADLSRLANYLNPDKKKLAAKGITSVRSRVANLTELLPGITHEQVCQAVTEAFFAHYGERIDAEVISPDKTPDLPNFTETFARQSSWEWNFGQAPAFSHLLDERFTWGGVELHFDVEKGVITRAQAFTDSLNPAPLEALAGRLQGCQYRADKLQETCEALIATFPEQESELRELANWVAGAVR.

The BPL/LPL catalytic domain maps to 29–216 (PATQRVLFLW…AFFAHYGERI (188 aa)). ATP-binding positions include arginine 71, 76–79 (GAVF), and lysine 134. Lysine 134 lines the (R)-lipoate pocket.

The protein belongs to the LplA family. As to quaternary structure, monomer.

The protein resides in the cytoplasm. It carries out the reaction L-lysyl-[lipoyl-carrier protein] + (R)-lipoate + ATP = N(6)-[(R)-lipoyl]-L-lysyl-[lipoyl-carrier protein] + AMP + diphosphate + H(+). The protein operates within protein modification; protein lipoylation via exogenous pathway; protein N(6)-(lipoyl)lysine from lipoate: step 1/2. Its pathway is protein modification; protein lipoylation via exogenous pathway; protein N(6)-(lipoyl)lysine from lipoate: step 2/2. In terms of biological role, catalyzes both the ATP-dependent activation of exogenously supplied lipoate to lipoyl-AMP and the transfer of the activated lipoyl onto the lipoyl domains of lipoate-dependent enzymes. This chain is Lipoate-protein ligase A, found in Salmonella paratyphi A (strain ATCC 9150 / SARB42).